Reading from the N-terminus, the 398-residue chain is MKKITILGSTGSIGINALSIIQKNPDLFKVIALVANKNFSIMLRQCELFSPDWVAMRDEKSAHILRKKLKHSKINTQVLTGEKDICALAALEETDHVISAIVGMAGLLPTLSAIHAGKTILLANKESLITSGYFFMKALSSSGAKIIPIDSEHNAIFQVLPLEIQKNLGKTTLEKNSIKHLVLTGSGGPFYKFSSSDLSNVTPDQACSHPNWLMGKKISVDSATMMNKGLEYAEARWLFNALESEIKILIHPESIIHSMVQYYDGSLLAQLSVPDIRTSISYAMSWPDRICTEVDYLNFYKINNLTFFEPDFTQFPCLKLAIDAFSQGQASMTVLNAANEIAVSSFLDSKISFTKIYEINMEILMSSCFSEPKCIQDILEIDRKVRILAKNKVSSLIF.

The NADPH site is built by threonine 10, glycine 11, serine 12, isoleucine 13, lysine 37, asparagine 38, and asparagine 124. 1-deoxy-D-xylulose 5-phosphate is bound at residue lysine 125. Glutamate 126 is an NADPH binding site. Aspartate 150 serves as a coordination point for Mn(2+). 1-deoxy-D-xylulose 5-phosphate is bound by residues serine 151, glutamate 152, serine 186, and histidine 209. Glutamate 152 is a binding site for Mn(2+). NADPH is bound at residue glycine 215. 4 residues coordinate 1-deoxy-D-xylulose 5-phosphate: serine 222, asparagine 227, lysine 228, and glutamate 231. A Mn(2+)-binding site is contributed by glutamate 231.

It belongs to the DXR family. As to quaternary structure, homodimer. The cofactor is Mg(2+). Requires Mn(2+) as cofactor.

It carries out the reaction 2-C-methyl-D-erythritol 4-phosphate + NADP(+) = 1-deoxy-D-xylulose 5-phosphate + NADPH + H(+). The protein operates within isoprenoid biosynthesis; isopentenyl diphosphate biosynthesis via DXP pathway; isopentenyl diphosphate from 1-deoxy-D-xylulose 5-phosphate: step 1/6. Catalyzes the NADPH-dependent rearrangement and reduction of 1-deoxy-D-xylulose-5-phosphate (DXP) to 2-C-methyl-D-erythritol 4-phosphate (MEP). The protein is 1-deoxy-D-xylulose 5-phosphate reductoisomerase of Buchnera aphidicola subsp. Acyrthosiphon pisum (strain APS) (Acyrthosiphon pisum symbiotic bacterium).